The primary structure comprises 2493 residues: Non-reducing polyketide synthase pkiA (2493 aa).

Residues 129–243 (PLLMMTHFVQ…VQYDENRATI (115 aa)) form an N-terminal acylcarrier protein transacylase domain (SAT) region. C160 functions as the Nucleophile; for transacylase activity in the catalytic mechanism. The Proton donor/acceptor; for transacylase activity role is filled by H274. Residues 401 to 818 (ETDIAIVGMA…GSNASMVITQ (418 aa)) enclose the Ketosynthase family 3 (KS3) domain. Catalysis depends on for beta-ketoacyl synthase activity residues C567, H702, and H741. The segment at 926 to 1261 (CFGGQVGRSI…EYAPLLLPPY (336 aa)) is malonyl-CoA:ACP transacylase (MAT). Positions 1259 to 1387 (PPYQFERTRH…AHISMHDVRC (129 aa)) are N-terminal hotdog fold. Residues 1259-1562 (PPYQFERTRH…YSRVAKSLFT (304 aa)) form the PKS/mFAS DH domain. H1291 functions as the Proton acceptor; for dehydratase activity in the catalytic mechanism. The segment at 1297–1558 (APIAPATLLL…LGLRYSRVAK (262 aa)) is product template (PT) domain. The C-terminal hotdog fold stretch occupies residues 1415 to 1562 (VDDILQGRNV…YSRVAKSLFT (148 aa)). The active-site Proton donor; for dehydratase activity is the D1471. Residues 1588–1662 (KDLVSRVKAV…DLVQAVQSAL (75 aa)) enclose the Carrier domain. An O-(pantetheine 4'-phosphoryl)serine modification is found at S1622. A methyltransferase (CMeT) domain region spans residues 1822 to 2063 (REYPEYGGAS…YGHVDWTDGE (242 aa)). Residues 2128–2366 (VTGATGSLGS…TPVDVAARII (239 aa)) form an NADPH-binding domain region.

The cofactor is pantetheine 4'-phosphate.

The enzyme catalyses decanoyl-[ACP] + 4 malonyl-CoA + AH2 + S-adenosyl-L-methionine + 3 H(+) = 2,4-dihydroxy-3-methyl-6-(2-oxoundecyl)benzaldehyde + holo-[ACP] + A + S-adenosyl-L-homocysteine + 4 CO2 + 4 CoA + H2O. Its pathway is secondary metabolite biosynthesis. In terms of biological role, non-reducing polyketide synthase; part of the pki gene cluster that mediates the biosynthesis of 2,4-dihydroxy-3-methyl-6-(2-oxoundecyl)benzaldehyde. The first step in the pathway is the generation of the decanoyl starter unit by the FAS composed of subunits pkiB and pkiC, which is then transferred directly from the FAS to the SAT domain of the non-reducing polyketide synthase pkiA. PkiA condenses the decanoyyl starter unit with 4 malonyl-CoA units and performs one methylation step to yield 2,4-dihydroxy-3-methyl-6-(2-oxoundecyl)benzaldehyde. The sequence is that of Non-reducing polyketide synthase pkiA from Emericella nidulans (strain FGSC A4 / ATCC 38163 / CBS 112.46 / NRRL 194 / M139) (Aspergillus nidulans).